The primary structure comprises 367 residues: NAD(P)H-quinone oxidoreductase subunit 1, chloroplastic (367 aa).

7 consecutive transmembrane segments (helical) span residues L30–L50, F98–F118, L127–M147, A164–L184, L273–P293, V304–I324, and L340–T360.

It belongs to the complex I subunit 1 family. NDH is composed of at least 16 different subunits, 5 of which are encoded in the nucleus.

The protein localises to the plastid. The protein resides in the chloroplast thylakoid membrane. The catalysed reaction is a plastoquinone + NADH + (n+1) H(+)(in) = a plastoquinol + NAD(+) + n H(+)(out). The enzyme catalyses a plastoquinone + NADPH + (n+1) H(+)(in) = a plastoquinol + NADP(+) + n H(+)(out). Functionally, NDH shuttles electrons from NAD(P)H:plastoquinone, via FMN and iron-sulfur (Fe-S) centers, to quinones in the photosynthetic chain and possibly in a chloroplast respiratory chain. The immediate electron acceptor for the enzyme in this species is believed to be plastoquinone. Couples the redox reaction to proton translocation, and thus conserves the redox energy in a proton gradient. In Nicotiana tabacum (Common tobacco), this protein is NAD(P)H-quinone oxidoreductase subunit 1, chloroplastic.